Here is a 434-residue protein sequence, read N- to C-terminus: ATP-dependent protease ATPase subunit HslU (434 aa).

Residues Ile-18, 60-65 (GVGKTE), Asp-247, Glu-312, and Arg-384 contribute to the ATP site.

It belongs to the ClpX chaperone family. HslU subfamily. A double ring-shaped homohexamer of HslV is capped on each side by a ring-shaped HslU homohexamer. The assembly of the HslU/HslV complex is dependent on binding of ATP.

The protein localises to the cytoplasm. Functionally, ATPase subunit of a proteasome-like degradation complex; this subunit has chaperone activity. The binding of ATP and its subsequent hydrolysis by HslU are essential for unfolding of protein substrates subsequently hydrolyzed by HslV. HslU recognizes the N-terminal part of its protein substrates and unfolds these before they are guided to HslV for hydrolysis. In Brucella suis (strain ATCC 23445 / NCTC 10510), this protein is ATP-dependent protease ATPase subunit HslU.